A 430-amino-acid chain; its full sequence is Serine hydroxymethyltransferase 1 (430 aa).

Residues Leu132 and Gly136–Leu138 each bind (6S)-5,6,7,8-tetrahydrofolate. Lys241 is subject to N6-(pyridoxal phosphate)lysine.

The protein belongs to the SHMT family. In terms of assembly, homodimer. Pyridoxal 5'-phosphate is required as a cofactor.

The protein localises to the cytoplasm. The enzyme catalyses (6R)-5,10-methylene-5,6,7,8-tetrahydrofolate + glycine + H2O = (6S)-5,6,7,8-tetrahydrofolate + L-serine. It functions in the pathway one-carbon metabolism; tetrahydrofolate interconversion. It participates in amino-acid biosynthesis; glycine biosynthesis; glycine from L-serine: step 1/1. In terms of biological role, catalyzes the reversible interconversion of serine and glycine with tetrahydrofolate (THF) serving as the one-carbon carrier. This reaction serves as the major source of one-carbon groups required for the biosynthesis of purines, thymidylate, methionine, and other important biomolecules. Also exhibits THF-independent aldolase activity toward beta-hydroxyamino acids, producing glycine and aldehydes, via a retro-aldol mechanism. In Bordetella parapertussis (strain 12822 / ATCC BAA-587 / NCTC 13253), this protein is Serine hydroxymethyltransferase 1.